We begin with the raw amino-acid sequence, 218 residues long: Small ribosomal subunit protein uS3c (218 aa).

Positions 39–118 (IRNFIKNYVQ…KLNIAITRIA (80 aa)) constitute a KH type-2 domain.

The protein belongs to the universal ribosomal protein uS3 family. In terms of assembly, part of the 30S ribosomal subunit.

It localises to the plastid. It is found in the chloroplast. The chain is Small ribosomal subunit protein uS3c (rps3) from Ipomoea purpurea (Common morning glory).